A 115-amino-acid chain; its full sequence is Procyclic form-specific polypeptide (115 aa).

Positions 1–27 are cleaved as a signal peptide; it reads MAPRSLYLLAVLLFSANLFAGVGFAAA. The disordered stretch occupies residues 27 to 97; the sequence is AAEGPEDKGL…PEPEPGAATL (71 aa). The span at 31–52 shows a compositional bias: basic and acidic residues; it reads PEDKGLTKGGKGKGEKGTKVGA. N-linked (GlcNAc...) asparagine glycosylation is present at asparagine 56. 17 tandem repeats follow at residues 59 to 60, 61 to 62, 63 to 64, 65 to 66, 67 to 68, 69 to 70, 71 to 72, 73 to 74, 75 to 76, 77 to 78, 79 to 80, 81 to 82, 83 to 84, 85 to 86, 87 to 88, 89 to 90, and 91 to 92. The interval 59 to 92 is 17 X 2 AA tandem repeats of [DE]-P; it reads DPDPEPEPEPEPEPEPEPEPEPEPEPEPEPEPEP. Positions 60–90 are enriched in acidic residues; sequence PDPEPEPEPEPEPEPEPEPEPEPEPEPEPEP. A lipid anchor (GPI-anchor amidated glycine) is attached at glycine 93. A propeptide spans 94–115 (removed in mature form); the sequence is AATLKSVALPFAIAAAALVAAF.

It is found in the cell membrane. In terms of biological role, major surface antigen of procyclic forms. In Trypanosoma brucei brucei, this protein is Procyclic form-specific polypeptide (PROA).